A 615-amino-acid polypeptide reads, in one-letter code: Deoxyribodipyrimidine photo-lyase (615 aa).

Residues 1 to 53 (MAPSKRKASAPPQTSHVNGNPSADKKRKTTTDAPPTNPNTSSDPLRAPHPFYK) form a disordered region. The span at 11–21 (PPQTSHVNGNP) shows a compositional bias: polar residues. Over residues 31–40 (TDAPPTNPNT) the composition is skewed to low complexity. The 142-residue stretch at 108–249 (QAVVHWFKMD…AADVVHDTCV (142 aa)) folds into the Photolyase/cryptochrome alpha/beta domain. FAD is bound at residue Tyr352. Position 356 (Arg356) interacts with DNA. Position 364 to 368 (364 to 368 (TSNLS)) interacts with FAD. Interaction with DNA stretches follow at residues 407–414 (EVAWRDFY) and 474–475 (NR). FAD is bound at residue 505 to 507 (DGD). Gln537 is a binding site for DNA.

It belongs to the DNA photolyase class-1 family. As to quaternary structure, monomer. It depends on FAD as a cofactor. The cofactor is (6R)-5,10-methylene-5,6,7,8-tetrahydrofolate.

The catalysed reaction is cyclobutadipyrimidine (in DNA) = 2 pyrimidine residues (in DNA).. Involved in repair of UV radiation-induced DNA damage. Catalyzes the light-dependent monomerization (300-600 nm) of cyclobutyl pyrimidine dimers (in cis-syn configuration), which are formed between adjacent bases on the same DNA strand upon exposure to ultraviolet radiation. The sequence is that of Deoxyribodipyrimidine photo-lyase (phr) from Neurospora crassa (strain ATCC 24698 / 74-OR23-1A / CBS 708.71 / DSM 1257 / FGSC 987).